An 89-amino-acid chain; its full sequence is Large ribosomal subunit protein eL34 (89 aa).

Residues 1–29 are disordered; the sequence is MSAPRFRNGTFKRTLKRVPGGRKVEHYKK. The span at 13–29 shows a compositional bias: basic residues; it reads RTLKRVPGGRKVEHYKK.

It belongs to the eukaryotic ribosomal protein eL34 family.

In Methanosphaera stadtmanae (strain ATCC 43021 / DSM 3091 / JCM 11832 / MCB-3), this protein is Large ribosomal subunit protein eL34.